Here is a 175-residue protein sequence, read N- to C-terminus: Probable DNA-directed RNA polymerase subunit delta (175 aa).

The HTH HARE-type domain maps to 14-81 (CSMIEVVHSV…GENRWGLRSW (68 aa)). The disordered stretch occupies residues 91–175 (ILPQPKPKKK…DETEEEEEEL (85 aa)). Positions 106–175 (DGFDDYIEED…DETEEEEEEL (70 aa)) are enriched in acidic residues.

This sequence belongs to the RpoE family. As to quaternary structure, RNAP is composed of a core of 2 alpha, a beta and a beta' subunits. The core is associated with a delta subunit and one of several sigma factors.

Participates in both the initiation and recycling phases of transcription. In the presence of the delta subunit, RNAP displays an increased specificity of transcription, a decreased affinity for nucleic acids, and an increased efficiency of RNA synthesis because of enhanced recycling. The sequence is that of Probable DNA-directed RNA polymerase subunit delta from Bacillus anthracis.